Reading from the N-terminus, the 623-residue chain is MCNDTATPQLEELVTTVANQLMTVDAATSAEVSQRVLAYLVEQLGVDVSFLRHNDRDRRATRLVAEWPPRLNIPDPDPLRLIYFADADPVFALCEHAKEPLVFRPEPATEDYQRLIEEARGVPVTSAAAVPLVSGEITTGLLGFIKFGDRKWHEAELNALMTIATLFAQVQARVAAEARLRYLADHDDLTGLHNRRALLQHLDQRLAPGQPGPVAALFLDLDRLKAINDYLGHAAGDQFIHVFAQRIGDALVGESLIARLGGDEFVLIPASPMSADAAQPLAERLRDQLKDHVAIGGEVLTRTVSIGVASGTPGQHTPSDLLRRADQAALAAKHAGGDSVAIFTADMSVSGELRNDIELHLRRGIESDALRLVYLPEVDLRTGDIVGTEALVRWQHPTRGLLAPGCFIPVAESINLAGELDRWVLRRACNEFSEWQSAGLGHDALLRINVSAGQLVTGGFVDFVADTIGQHGLDASSVCLEITENVVVQDLHTARATLARLKEVGVHIAIDDFGTGYSAISLLQTLPIDTLKIDKTFVRQLGTNTSDLVIVRGIMTLAEGFQLDVVAEGVETEAAARILLDQRCYRAQGFLFSRPVPGEAMRHMLSARRLPPTCIPATDPALS.

Residues 28–171 enclose the GAF domain; the sequence is TSAEVSQRVL…TIATLFAQVQ (144 aa). A GGDEF domain is found at 212 to 345; that stretch reads GPVAALFLDL…GGDSVAIFTA (134 aa). Residues 354–609 form the EAL domain; it reads RNDIELHLRR…AMRHMLSARR (256 aa).

This is an uncharacterized protein from Mycobacterium tuberculosis (strain CDC 1551 / Oshkosh).